We begin with the raw amino-acid sequence, 162 residues long: Putative 4-hydroxy-4-methyl-2-oxoglutarate aldolase (162 aa).

Substrate is bound by residues 75–78 and arginine 97; that span reads GDML. Aspartate 98 is an a divalent metal cation binding site.

The protein belongs to the class II aldolase/RraA-like family. Homotrimer. A divalent metal cation is required as a cofactor.

The enzyme catalyses 4-hydroxy-4-methyl-2-oxoglutarate = 2 pyruvate. It catalyses the reaction oxaloacetate + H(+) = pyruvate + CO2. Catalyzes the aldol cleavage of 4-hydroxy-4-methyl-2-oxoglutarate (HMG) into 2 molecules of pyruvate. Also contains a secondary oxaloacetate (OAA) decarboxylase activity due to the common pyruvate enolate transition state formed following C-C bond cleavage in the retro-aldol and decarboxylation reactions. In Pseudomonas syringae pv. tomato (strain ATCC BAA-871 / DC3000), this protein is Putative 4-hydroxy-4-methyl-2-oxoglutarate aldolase.